We begin with the raw amino-acid sequence, 850 residues long: cAMP-inducible prespore protein D7 (850 aa).

The N-terminal stretch at Met1 to Ser24 is a signal peptide. The span at Gln119–Ser130 shows a compositional bias: low complexity. Disordered stretches follow at residues Gln119–Thr167 and Asp787–Lys850. Over residues Thr131–Asn143 the composition is skewed to polar residues. Low complexity predominate over residues Gly144 to Ser154. A compositionally biased stretch (basic and acidic residues) spans Asp787–Asn798. Over residues Glu801–Asn820 the composition is skewed to polar residues. The segment covering Glu837–Lys850 has biased composition (low complexity).

This Dictyostelium discoideum (Social amoeba) protein is cAMP-inducible prespore protein D7 (D7).